Reading from the N-terminus, the 396-residue chain is L-lactate dehydrogenase (396 aa).

In terms of domain architecture, FMN hydroxy acid dehydrogenase spans 1-380; sequence MIISAASDYR…TQDSLVQVLG (380 aa). Substrate is bound at residue Tyr-24. Residues Ser-106 and Gln-127 each coordinate FMN. Substrate is bound at residue Tyr-129. Thr-155 lines the FMN pocket. Arg-164 is a binding site for substrate. Residue Lys-251 participates in FMN binding. The active-site Proton acceptor is the His-275. Position 278 (Arg-278) interacts with substrate. Position 306–330 (306–330) interacts with FMN; sequence DSGIRNGLDVVRMIALGADTVLLGR.

This sequence belongs to the FMN-dependent alpha-hydroxy acid dehydrogenase family. It depends on FMN as a cofactor.

The protein resides in the cell inner membrane. The catalysed reaction is (S)-lactate + A = pyruvate + AH2. Functionally, catalyzes the conversion of L-lactate to pyruvate. Is coupled to the respiratory chain. The sequence is that of L-lactate dehydrogenase from Escherichia coli O45:K1 (strain S88 / ExPEC).